Reading from the N-terminus, the 232-residue chain is Peptidoglycan-recognition protein LB (232 aa).

The signal sequence occupies residues M1–S15. The N-acetylmuramoyl-L-alanine amidase domain maps to A53–G179. H59 serves as a coordination point for Zn(2+). An intrachain disulfide couples C67 to C73. The Zn(2+) site is built by H169 and C177. N196 carries an N-linked (GlcNAc...) asparagine glycan. Positions H213–V232 are disordered.

It belongs to the N-acetylmuramoyl-L-alanine amidase 2 family. Monomer. Zn(2+) is required as a cofactor. Widely expressed.

The protein localises to the secreted. It carries out the reaction Hydrolyzes the link between N-acetylmuramoyl residues and L-amino acid residues in certain cell-wall glycopeptides.. In terms of biological role, N-acetylmuramyl-L-alanine amidase involved in innate immunity by degrading bacterial peptidoglycans (PGN). Probably plays a scavenger role by digesting biologically active PGN into biologically inactive fragments. Has no direct bacteriolytic activity. The chain is Peptidoglycan-recognition protein LB (PGRP-LB) from Drosophila melanogaster (Fruit fly).